The chain runs to 1505 residues: MFNSYQATGMGYNPNQQQQQPPPPQQQQQLYSQPTAFGQPNLYGSNMQQGYIQTQPTGFAGAPTVIENNELKIPSIRLSFITAEDQKKFEHLFRSAVPRGEQSMSGDTASNILLRSGLTPVVLAEIWTLSDIDKTGALLFPEFALSLHLCNMAKRGEPLPGVLPQKWHNEVQSFIDAINFSIPDDPNKILANTPFAKKDDWLSNVGQPQSNWMAPQGTGYPQTSFLQNQATGFAQQPTGFGQQATGFGQQATGFGQQSSWLAPQATGFNNSAPPPSTSFGGTGTGIVAGAGAGASAAPTGGFVPLQPQQTAGLIQKPAGLQPQSTGFMAPQRTGGLAPQATGLAPQATGLQAQRTGGFGVPQQATGYQQSFNTGGLQANKTGPLQPNHTGYNFQQQQQQQQQATGLQRQPTGVLQQQPTGYLQQQPTGYLQSQPTGRPGEWGFVSMPTGGMPGLNSMQQVFQPNNTQTYQDLHKVMNDNSASNVTWAISKQEKQIYDRLFQAWDTGRNGYVDSNVALNVFTKSGLGRQDLEAIWTLADTDDVGKLNKNQFAVAMHLIYRRLNGLEIPLRLPPELIPPADKTLKDTMDSLKNSLKNGGAKQTRSKPMTKPDGSRFKNDDSDFGYVSSSRYKKKSEEEKQANARTSKDFGLSIDDMKKLIREKKILIDAMDVEDEDRQRTSDREVDALKSKIYELQKKLSGSSNNGGNSKEALLAKLERTGKRIPSLLQQLNQVNQEISEKSVELVKLQLKREDPSWDEAKVDVSGAGGKFDLKQKMAMLTGKGGSAMADSKYRDAVEKSKSDLKNQSDMVKDIESGIRSLEDDCSAKLRTTAKNAVGYEKWENGFGVSKAVADFVKELNKLKADAQPEFARSADNTTTARSSSAYAQQVPPAASRTFSAQETNASPGAVTSTGTGGSGSGSGSATYSTPEERAAYIKAEAAKRMASRLEKLGISRTKRAPKAAEKHDEIVSKPSPSREEPPRLSGEAAIANPVERAPSADKTPVNTAHAESHAQTTSSNRAPEAKPEQVSVPVESQRENFRENKWDEEKQYRPSQTNNNDNNNISSTHQSQEHIVKENAKNVESAPQAPTSNYSQQPPAFGGAFQSESSRATETEQAESKKESETTPVVPPAPAAASTEPAQPAQPAQASQASKPAQPAQPANSTEPASASASEQPAVRRHENNPFFKNKFQPVDTQKISMQRNFQRGTSNDNSWSDSEEEDSEDEAPNRAGAAQLANLLFGSMSSQPTGNAAFAKSAAQEPSKDEKSIGAENASGHESKMNAELSSSENTAAGVSQVNETPAQSSYEEPSLQEQSSYESNAVPAAPSLPESVPPPAPAPEAPSLPQSVPPPPPIPSEYSAPPAPSLPRDVPPAPEAPSLPQSIPPPPPVPSEYSAPPAPPAPPAPSLPQSIPPPPPVPSEYSAPPAPPAPPAPPAPPAPSLPSSIPPPPPAPPLSSNDSSLASAAAPPAGGAPNIGALLGQITGGKSLKKVETKVSSGATVGRVL.

The disordered stretch occupies residues 1–30 (MFNSYQATGMGYNPNQQQQQPPPPQQQQQL). Positions 85–174 (DQKKFEHLFR…QKWHNEVQSF (90 aa)) constitute an EH 1 domain. Positions 118-153 (LTPVVLAEIWTLSDIDKTGALLFPEFALSLHLCNMA) constitute an EF-hand 1 domain. Polar residues-rich tracts occupy residues 364–393 (ATGYQQSFNTGGLQANKTGPLQPNHTGYNF) and 403–413 (ATGLQRQPTGV). 2 disordered regions span residues 364–416 (ATGY…VLQQ) and 422–441 (LQQQPTGYLQSQPTGRPGEW). Positions 492–581 (EKQIYDRLFQ…PELIPPADKT (90 aa)) constitute an EH 2 domain. The EF-hand 2 domain occupies 525–560 (LGRQDLEAIWTLADTDDVGKLNKNQFAVAMHLIYRR). Positions 588–604 (SLKNSLKNGGAKQTRSK) are enriched in polar residues. Positions 588 to 620 (SLKNSLKNGGAKQTRSKPMTKPDGSRFKNDDSD) are disordered. The stretch at 677–752 (RTSDREVDAL…LVKLQLKRED (76 aa)) forms a coiled coil. Disordered regions lie at residues 867–927 (EFAR…TYST) and 948–1505 (EKLG…GRVL). A compositionally biased stretch (polar residues) spans 872–885 (ADNTTTARSSSAYA). Composition is skewed to basic and acidic residues over residues 960 to 980 (KAAEKHDEIVSKPSPSREEPP), 1034 to 1050 (SQRENFRENKWDEEKQY), and 1069 to 1079 (SQEHIVKENAK). The segment covering 1086 to 1096 (QAPTSNYSQQP) has biased composition (polar residues). Residues 1109–1123 (RATETEQAESKKESE) are compositionally biased toward basic and acidic residues. The segment covering 1133 to 1175 (AAASTEPAQPAQPAQASQASKPAQPAQPANSTEPASASASEQP) has biased composition (low complexity). Residues 1193-1208 (VDTQKISMQRNFQRGT) show a composition bias toward polar residues. Residues 1216-1225 (DSEEEDSEDE) are compositionally biased toward acidic residues. Positions 1261–1280 (PSKDEKSIGAENASGHESKM) are enriched in basic and acidic residues. Polar residues predominate over residues 1283–1319 (ELSSSENTAAGVSQVNETPAQSSYEEPSLQEQSSYES). The segment covering 1321 to 1330 (AVPAAPSLPE) has biased composition (low complexity). Positions 1331 to 1453 (SVPPPAPAPE…SIPPPPPAPP (123 aa)) are enriched in pro residues. The span at 1454 to 1472 (LSSNDSSLASAAAPPAGGA) shows a compositional bias: low complexity. A WH2 domain is found at 1474 to 1491 (NIGALLGQITGGKSLKKV).

This sequence belongs to the PAN1 family. Component of the PAN1 actin cytoskeleton-regulatory complex.

The protein localises to the cell membrane. It is found in the endosome membrane. The protein resides in the cytoplasm. It localises to the cytoskeleton. Its subcellular location is the actin patch. In terms of biological role, component of the PAN1 actin cytoskeleton-regulatory complex required for the internalization of endosomes during actin-coupled endocytosis. The complex links the site of endocytosis to the cell membrane-associated actin cytoskeleton. Mediates uptake of external molecules and vacuolar degradation of plasma membrane proteins. Plays a role in the proper organization of the cell membrane-associated actin cytoskeleton and promotes its destabilization. This chain is Actin cytoskeleton-regulatory complex protein PAN1 (PAN1), found in Lodderomyces elongisporus (strain ATCC 11503 / CBS 2605 / JCM 1781 / NBRC 1676 / NRRL YB-4239) (Yeast).